Consider the following 494-residue polypeptide: Cytochrome P450 2A7 (494 aa).

Cys-439 is a heme binding site.

It belongs to the cytochrome P450 family. It depends on heme as a cofactor.

It is found in the endoplasmic reticulum membrane. It localises to the microsome membrane. It carries out the reaction an organic molecule + reduced [NADPH--hemoprotein reductase] + O2 = an alcohol + oxidized [NADPH--hemoprotein reductase] + H2O + H(+). In terms of biological role, cytochromes P450 are a group of heme-thiolate monooxygenases. In liver microsomes, this enzyme is involved in an NADPH-dependent electron transport pathway. It oxidizes a variety of structurally unrelated compounds, including steroids, fatty acids, and xenobiotics. The protein is Cytochrome P450 2A7 (CYP2A7) of Homo sapiens (Human).